The primary structure comprises 265 residues: 2-Cys peroxiredoxin BAS1, chloroplastic (265 aa).

The transit peptide at 1–65 directs the protein to the chloroplast; the sequence is MACVASSTTL…SSTSRRSFAV (65 aa). Residues 73 to 232 form the Thioredoxin domain; that stretch reads PLVGNKAPDF…TMRTLQALQY (160 aa). Residue Cys-119 is the Cysteine sulfenic acid (-SOH) intermediate of the active site.

Belongs to the peroxiredoxin family. AhpC/Prx1 subfamily. Homodimer; disulfide-linked, upon oxidation.

The protein localises to the plastid. It is found in the chloroplast. The enzyme catalyses a hydroperoxide + [thioredoxin]-dithiol = an alcohol + [thioredoxin]-disulfide + H2O. Functionally, thiol-specific peroxidase that catalyzes the reduction of hydrogen peroxide and organic hydroperoxides to water and alcohols, respectively. Plays a role in cell protection against oxidative stress by detoxifying peroxides. May be an antioxidant enzyme particularly in the developing shoot and photosynthesizing leaf. The polypeptide is 2-Cys peroxiredoxin BAS1, chloroplastic (BAS1) (Spinacia oleracea (Spinach)).